Here is a 126-residue protein sequence, read N- to C-terminus: Large ribosomal subunit protein bL12 (126 aa).

Belongs to the bacterial ribosomal protein bL12 family. In terms of assembly, homodimer. Part of the ribosomal stalk of the 50S ribosomal subunit. Forms a multimeric L10(L12)X complex, where L10 forms an elongated spine to which 2 to 4 L12 dimers bind in a sequential fashion. Binds GTP-bound translation factors.

Forms part of the ribosomal stalk which helps the ribosome interact with GTP-bound translation factors. Is thus essential for accurate translation. The sequence is that of Large ribosomal subunit protein bL12 from Streptococcus pyogenes serotype M28 (strain MGAS6180).